A 380-amino-acid chain; its full sequence is Flap endonuclease 1-A (380 aa).

The segment at 1–105 (MGIKGLTKLL…EELAKRFSKR (105 aa)) is N-domain. Position 34 (aspartate 34) interacts with Mg(2+). Arginine 71 is a DNA binding site. Mg(2+) is bound by residues aspartate 87, glutamate 159, glutamate 161, aspartate 180, and aspartate 182. Residues 123–254 (AVEKLSKRTV…QTALKLIRQH (132 aa)) are I-domain. Glutamate 159 provides a ligand contact to DNA. DNA-binding residues include glycine 232 and aspartate 234. Mg(2+) is bound at residue aspartate 234. An interaction with PCNA region spans residues 336 to 344 (SQGRLESFF). Positions 351-380 (SAPLKRKETSDKTSKAAAANKKTKAGGKKK) are disordered. A compositionally biased stretch (basic and acidic residues) spans 355 to 364 (KRKETSDKTS). The segment covering 371-380 (KKTKAGGKKK) has biased composition (basic residues).

It belongs to the XPG/RAD2 endonuclease family. FEN1 subfamily. In terms of assembly, interacts with PCNA. Three molecules of FEN1 bind to one PCNA trimer with each molecule binding to one PCNA monomer. PCNA stimulates the nuclease activity without altering cleavage specificity. Mg(2+) serves as cofactor. Phosphorylated. Phosphorylation upon DNA damage induces relocalization to the nuclear plasma.

The protein localises to the nucleus. Its subcellular location is the nucleolus. It is found in the nucleoplasm. It localises to the mitochondrion. Functionally, structure-specific nuclease with 5'-flap endonuclease and 5'-3' exonuclease activities involved in DNA replication and repair. During DNA replication, cleaves the 5'-overhanging flap structure that is generated by displacement synthesis when DNA polymerase encounters the 5'-end of a downstream Okazaki fragment. It enters the flap from the 5'-end and then tracks to cleave the flap base, leaving a nick for ligation. Also involved in the long patch base excision repair (LP-BER) pathway, by cleaving within the apurinic/apyrimidinic (AP) site-terminated flap. Acts as a genome stabilization factor that prevents flaps from equilibrating into structures that lead to duplications and deletions. Also possesses 5'-3' exonuclease activity on nicked or gapped double-stranded DNA, and exhibits RNase H activity. Also involved in replication and repair of rDNA and in repairing mitochondrial DNA. The protein is Flap endonuclease 1-A of Sorghum bicolor (Sorghum).